A 231-amino-acid chain; its full sequence is Chromosome partition protein MukE (231 aa).

The interval 197–231 (RDGEAMPIEGGLSLDDSENDETSDNSAEGTGDEQP) is disordered.

It belongs to the MukE family. In terms of assembly, interacts, and probably forms a ternary complex, with MukF and MukB. The complex formation is stimulated by calcium or magnesium.

Its subcellular location is the cytoplasm. The protein resides in the nucleoid. Involved in chromosome condensation, segregation and cell cycle progression. May participate in facilitating chromosome segregation by condensation DNA from both sides of a centrally located replisome during cell division. Probably acts via its interaction with MukB and MukF. The polypeptide is Chromosome partition protein MukE (Photorhabdus laumondii subsp. laumondii (strain DSM 15139 / CIP 105565 / TT01) (Photorhabdus luminescens subsp. laumondii)).